Here is an 85-residue protein sequence, read N- to C-terminus: Small cysteine and glycine repeat-containing protein 5 (85 aa).

Positions 4–69 (CGCGGCGGCG…TCCSCGCGCG (66 aa)) are 10 X 2 AA repeats of CG.

It belongs to the KRTAP type 28 family.

Its function is as follows. In the hair cortex, hair keratin intermediate filaments are embedded in an interfilamentous matrix, consisting of hair keratin-associated proteins (KRTAP), which are essential for the formation of a rigid and resistant hair shaft through their extensive disulfide bond cross-linking with abundant cysteine residues of hair keratins. The matrix proteins include the high-sulfur and high-glycine-tyrosine keratins. This Homo sapiens (Human) protein is Small cysteine and glycine repeat-containing protein 5.